Consider the following 185-residue polypeptide: Putative manganese efflux pump MntP (185 aa).

6 consecutive transmembrane segments (helical) span residues 3–23, 41–61, 70–90, 101–121, 123–143, and 165–185; these read PFAV…VSVG, AVFG…GVAA, HWLA…AAVW, SFTV…AVGV, LAFL…ATFL, and AVAG…HLTA.

The protein belongs to the MntP (TC 9.B.29) family.

The protein localises to the cell inner membrane. In terms of biological role, probably functions as a manganese efflux pump. In Bradyrhizobium sp. (strain BTAi1 / ATCC BAA-1182), this protein is Putative manganese efflux pump MntP.